The sequence spans 299 residues: Trimeric intracellular cation channel type A (299 aa).

The Lumenal segment spans residues 1 to 18; the sequence is MELLSALSLGELALSFSR. The chain crosses the membrane as a helical span at residues 19-39; it reads VPLFPVFDLSYFIVSILYLKY. Over 40 to 51 the chain is Cytoplasmic; the sequence is EPGAVELSRRHP. A helical membrane pass occupies residues 52–72; that stretch reads IASWLCAMLHCFGSYILADLL. The Lumenal portion of the chain corresponds to 73-85; it reads LGEPLIDYFSNNS. Gly74 provides a ligand contact to Ca(2+). The chain crosses the membrane as a helical span at residues 86–106; the sequence is SILLASAVWYLIFFCPLDLFY. Residues 107-144 lie on the Cytoplasmic side of the membrane; that stretch reads KCVCFLPVKLIFVAMKEVVRVRKIAVGIHHAHHHYHHG. A 1,2-diacyl-sn-glycero-3-phospho-(1D-myo-inositol-4,5-bisphosphate) is bound by residues Lys122 and Arg126. Residues 145-165 traverse the membrane as a helical segment; it reads WFVMIATGWVKGSGVALMSNF. The Lumenal portion of the chain corresponds to 166-178; it reads EQLLRGVWKPETN. The chain crosses the membrane as a helical span at residues 179–199; it reads EILHMSFPTKASLYGAILFTL. At 200–209 the chain is on the cytoplasmic side; the sequence is QQTRWLPVSK. Residues 210–230 form a helical membrane-spanning segment; sequence ASLIFIFTLFMVSCKVFLTAT. Residues 231–234 are Lumenal-facing; that stretch reads HSHS. The helical transmembrane segment at 235–255 threads the bilayer; it reads SPFDALEGYICPVLFGSACGG. The Cytoplasmic portion of the chain corresponds to 256–299; sequence DHHHDNHGGSHSGGGPGAQHSAMPAKSKEELSEGSRKKKAKKAD. Residues 260–299 form a disordered region; sequence DNHGGSHSGGGPGAQHSAMPAKSKEELSEGSRKKKAKKAD. Positions 281-290 are enriched in basic and acidic residues; that stretch reads KSKEELSEGS.

This sequence belongs to the TMEM38 family. In terms of assembly, homotrimer; conformation seems to be controled by binding to diacylglycerol (DAG).

The protein localises to the sarcoplasmic reticulum membrane. It is found in the nucleus membrane. It catalyses the reaction K(+)(in) = K(+)(out). With respect to regulation, channel activity is activated by a change of voltage within the sarcoplasmic reticulum lumen and blocked by luminal high Ca(2+) levels. Its function is as follows. Intracellular monovalent cation channel required for maintenance of rapid intracellular calcium release. Acts as a potassium counter-ion channel that functions in synchronization with calcium release from intracellular stores. Opened by a change of voltage within the sarcoplasmic reticulum lumen. This is Trimeric intracellular cation channel type A from Homo sapiens (Human).